Reading from the N-terminus, the 189-residue chain is Stathmin-4 (189 aa).

2 S-palmitoyl cysteine lipidation sites follow: Cys-20 and Cys-22. The SLD domain maps to 48 to 189 (SDMEVIELNK…NKELKEEASR (142 aa)). Glu-54 and Ser-90 each carry phosphoserine. Residues 90–189 (SLEEIQKKLE…NKELKEEASR (100 aa)) adopt a coiled-coil conformation. Positions 168–189 (QEKDKHAEEVRKNKELKEEASR) are disordered.

The protein belongs to the stathmin family. In terms of tissue distribution, nervous tissue.

It localises to the golgi apparatus. The protein resides in the cell projection. The protein localises to the growth cone. It is found in the axon. Its function is as follows. Exhibits microtubule-destabilizing activity. In Rattus norvegicus (Rat), this protein is Stathmin-4 (Stmn4).